A 422-amino-acid polypeptide reads, in one-letter code: Proton-gated ion channel subunit pbo-6 (422 aa).

The signal sequence occupies residues 1–20 (MQCSFLTIFIFITTVTVGVA). At 21–233 (EFSEQYQGSS…IKVARKPFYY (213 aa)) the chain is on the extracellular side. Cysteine 151 and cysteine 165 form a disulfide bridge. Helical transmembrane passes span 234–254 (LISL…GLFA), 268–288 (LGVT…EKVP), and 294–314 (VPLL…ATIL). Residues 315 to 378 (TSTVMRVHAK…GEVSRRMDYL (64 aa)) lie on the Cytoplasmic side of the membrane. Residues 379 to 399 (LASVFIIIISTPTLYLFYMCF) traverse the membrane as a helical segment.

Belongs to the ligand-gated ion channel (TC 1.A.9) family. Acetylcholine receptor (TC 1.A.9.1) subfamily. In terms of assembly, the functional channel is a hetero-oligomer of pbo-5 and pbo-6. As to expression, expressed in the posterior body muscles.

Its subcellular location is the membrane. Functionally, forms a proton-gated ion channel with pbo-5 that is activated by acidification of the posterior coelomic space, leading to posterior body wall muscle contraction (pBoc) during the defecation cycle. Not necessary for stimulation of posterior body contraction (pBoc). Does not bind neurotransmitters such as acetylcholine, gamma-aminobutyric acid, glycine, serotonin, glutamate or choline. In Caenorhabditis elegans, this protein is Proton-gated ion channel subunit pbo-6.